Here is a 156-residue protein sequence, read N- to C-terminus: SsrA-binding protein (156 aa).

Belongs to the SmpB family.

It is found in the cytoplasm. Functionally, required for rescue of stalled ribosomes mediated by trans-translation. Binds to transfer-messenger RNA (tmRNA), required for stable association of tmRNA with ribosomes. tmRNA and SmpB together mimic tRNA shape, replacing the anticodon stem-loop with SmpB. tmRNA is encoded by the ssrA gene; the 2 termini fold to resemble tRNA(Ala) and it encodes a 'tag peptide', a short internal open reading frame. During trans-translation Ala-aminoacylated tmRNA acts like a tRNA, entering the A-site of stalled ribosomes, displacing the stalled mRNA. The ribosome then switches to translate the ORF on the tmRNA; the nascent peptide is terminated with the 'tag peptide' encoded by the tmRNA and targeted for degradation. The ribosome is freed to recommence translation, which seems to be the essential function of trans-translation. This chain is SsrA-binding protein, found in Renibacterium salmoninarum (strain ATCC 33209 / DSM 20767 / JCM 11484 / NBRC 15589 / NCIMB 2235).